A 293-amino-acid polypeptide reads, in one-letter code: Urease accessory protein UreD (293 aa).

It belongs to the UreD family. As to quaternary structure, ureD, UreF and UreG form a complex that acts as a GTP-hydrolysis-dependent molecular chaperone, activating the urease apoprotein by helping to assemble the nickel containing metallocenter of UreC. The UreE protein probably delivers the nickel.

The protein resides in the cytoplasm. Functionally, required for maturation of urease via the functional incorporation of the urease nickel metallocenter. The sequence is that of Urease accessory protein UreD from Cupriavidus metallidurans (strain ATCC 43123 / DSM 2839 / NBRC 102507 / CH34) (Ralstonia metallidurans).